A 267-amino-acid polypeptide reads, in one-letter code: Large ribosomal subunit protein bL9m (267 aa).

Residues 1-52 (MAALVVTEPGRALLRAGTERLLRGGIQELLRPRHEGNSPGLARDFSLSQNRG) constitute a mitochondrion transit peptide.

It belongs to the bacterial ribosomal protein bL9 family. In terms of assembly, component of the mitochondrial ribosome large subunit (39S) which comprises a 16S rRNA and about 50 distinct proteins.

The protein localises to the mitochondrion. The protein is Large ribosomal subunit protein bL9m (MRPL9) of Papio anubis (Olive baboon).